The sequence spans 341 residues: Porin-like protein L (341 aa).

An N-terminal signal peptide occupies residues 1-21; that stretch reads MNKKLIALAVAAASISSVATA.

It belongs to the Gram-negative porin family. Homotrimer.

Its subcellular location is the cell outer membrane. In terms of biological role, forms pores that allow passive diffusion of small molecules across the outer membrane. This is Porin-like protein L (ompL) from Photobacterium profundum (strain SS9).